Consider the following 789-residue polypeptide: Disintegrin and metalloproteinase domain-containing protein 7 (789 aa).

A signal peptide spans 1 to 25; the sequence is MFPTGIFLMSVLISQMQGRGIVGVE. Positions 26 to 176 are excised as a propeptide; sequence GQELVHPKKL…NYSCEGLNFT (151 aa). N84, N167, and N174 each carry an N-linked (GlcNAc...) asparagine glycan. Residues 177 to 668 are Extracellular-facing; that stretch reads KKSTLIDAKI…WGEALNLTSV (492 aa). The 195-residue stretch at 199–393 folds into the Peptidase M12B domain; the sequence is KFIELFVVAD…QKPACILNNP (195 aa). Intrachain disulfides connect C310-C388, C350-C372, C352-C357, and C459-C479. Residues 401 to 487 form the Disintegrin domain; that stretch reads YPFCGNKKVD…ECPKDESQAN (87 aa). 3 N-linked (GlcNAc...) asparagine glycosylation sites follow: N583, N628, and N664. The helical transmembrane segment at 669–689 threads the bilayer; sequence SIMVVVLVMVIIGVGLVILLI. Residues 690 to 789 lie on the Cytoplasmic side of the membrane; that stretch reads RYQKCIKMKQ…DSQSDCTRLG (100 aa). Residues 762–771 show a composition bias toward basic and acidic residues; that stretch reads DPRGIADPKQ. A disordered region spans residues 762-789; the sequence is DPRGIADPKQNDNMNLNLDSQSDCTRLG. Over residues 772–789 the composition is skewed to polar residues; sequence NDNMNLNLDSQSDCTRLG.

In terms of assembly, interacts with ITM2B in sperm; the interaction increases following capacitation. Interacts with HSPA5 and CANX. In terms of tissue distribution, expressed specifically in the caput region of the epididymis (at protein level).

It is found in the membrane. Functionally, required for normal male fertility via maintenance of epithelial cell morphology in the caput epididymis and subsequently correct epididymis lumen structure required for sperm development. Plays a role in sperm motility, flagella morphology and tyrosine phosphorylation during sperm capacitance. Plays a role in normal expression levels of HSPA5, ITM2B and ADAM2 in sperm both prior to and post-capacitation. This is a non catalytic metalloprotease-like protein. The sequence is that of Disintegrin and metalloproteinase domain-containing protein 7 from Rattus norvegicus (Rat).